The sequence spans 188 residues: Chitin synthase 2 (188 aa).

This sequence belongs to the chitin synthase family.

Its subcellular location is the cell membrane. It catalyses the reaction [(1-&gt;4)-N-acetyl-beta-D-glucosaminyl](n) + UDP-N-acetyl-alpha-D-glucosamine = [(1-&gt;4)-N-acetyl-beta-D-glucosaminyl](n+1) + UDP + H(+). Functionally, polymerizes chitin, a structural polymer of the cell wall and septum, by transferring the sugar moiety of UDP-GlcNAc to the non-reducing end of the growing chitin polymer. The sequence is that of Chitin synthase 2 (CHS2) from Exophiala jeanselmei (Dematiaceous fungus).